A 226-amino-acid polypeptide reads, in one-letter code: EEF1A lysine methyltransferase 3 (226 aa).

S-adenosyl-L-methionine contacts are provided by residues Trp57, Gly83–Gly85, Asp104, Trp133, and Ala150.

This sequence belongs to the methyltransferase superfamily. METTL21 family. Interacts with members of the heat shock protein 70 and 90 families and of the TCP-1 chaperonin family, as well as with HSPD1, STIP1 and tubulin; at least some of these proteins may be methylation substrates.

It is found in the cytoplasm. The protein localises to the cytoskeleton. It localises to the microtubule organizing center. The protein resides in the centrosome. It carries out the reaction L-lysyl-[protein] + 3 S-adenosyl-L-methionine = N(6),N(6),N(6)-trimethyl-L-lysyl-[protein] + 3 S-adenosyl-L-homocysteine + 3 H(+). The enzyme catalyses L-lysyl-[protein] + S-adenosyl-L-methionine = N(6)-methyl-L-lysyl-[protein] + S-adenosyl-L-homocysteine + H(+). It catalyses the reaction N(6)-methyl-L-lysyl-[protein] + S-adenosyl-L-methionine = N(6),N(6)-dimethyl-L-lysyl-[protein] + S-adenosyl-L-homocysteine + H(+). The catalysed reaction is N(6),N(6)-dimethyl-L-lysyl-[protein] + S-adenosyl-L-methionine = N(6),N(6),N(6)-trimethyl-L-lysyl-[protein] + S-adenosyl-L-homocysteine + H(+). Its function is as follows. Protein-lysine methyltransferase that selectively mono-, di- and trimethylates 'Lys-165' of the translation elongation factors EEF1A1 and EEF1A2 in an aminoacyl-tRNA and GTP-dependent manner. EEF1A1 methylation by EEF1AKMT3 is dynamic as well as inducible by stress conditions, such as ER-stress, and plays a regulatory role on mRNA translation. The protein is EEF1A lysine methyltransferase 3 of Homo sapiens (Human).